The following is a 1112-amino-acid chain: Mediator of RNA polymerase II transcription subunit 14 (1112 aa).

This sequence belongs to the Mediator complex subunit 14 family. In terms of assembly, component of the Mediator complex.

The protein localises to the nucleus. Functionally, component of the Mediator complex, a coactivator involved in the regulated transcription of nearly all RNA polymerase II-dependent genes. Mediator functions as a bridge to convey information from gene-specific regulatory proteins to the basal RNA polymerase II transcription machinery. Mediator is recruited to promoters by direct interactions with regulatory proteins and serves as a scaffold for the assembly of a functional preinitiation complex with RNA polymerase II and the general transcription factors. This chain is Mediator of RNA polymerase II transcription subunit 14 (RGR1), found in Scheffersomyces stipitis (strain ATCC 58785 / CBS 6054 / NBRC 10063 / NRRL Y-11545) (Yeast).